The following is a 205-amino-acid chain: SCO2-like protein RC0895 (205 aa).

Positions 82, 86, and 172 each coordinate Cu cation.

Belongs to the SCO1/2 family.

The chain is SCO2-like protein RC0895 from Rickettsia conorii (strain ATCC VR-613 / Malish 7).